The chain runs to 142 residues: Protein tost-1 (142 aa).

The interval 97–123 (KVFEEEDKENAPTKKAVLKPSSTDEKK) is disordered.

In terms of assembly, component of the tost-1 variant of the PETISCO complex (also called the pid-3, erh-2, tofu-6, and ife-3 small RNA complex) containing at least tost-1, tofu-6, ife-3, pid-3, and erh-2, which plays an essential role in embryogenesis. Within the complex interacts with erh-2. Within the complex interacts with pid-3 and tofu-6. In contrast to the pid-1 variant of the PETISCO complex, the tost-1 variant of the PETISCO complex plays a minor role in the biogenesis of a class of 21 nucleotide PIWI-interacting RNAs (piRNAs) that possess a uracil residue at the 5'-end (also called 21U-RNAs). As to expression, expressed in the germline.

The protein localises to the cytoplasm. It localises to the nucleus. Its function is as follows. Component of the tost-1 variant of the PETISCO complex which plays an essential role in embryogenesis. Within the complex acts as an adapter which binds to the complex via erh-2. Does not seem to play a role in the biogenesis of a class of 21 nucleotide PIWI-interacting RNAs (piRNAs) that possess a uracil residue at the 5'-end (also called 21U-RNAs). May inhibit 21U-RNA accumulation. Required for chromosome segregation and cell division in early embryos. The protein is Protein tost-1 of Caenorhabditis elegans.